The primary structure comprises 393 residues: S-adenosylmethionine decarboxylase proenzyme (393 aa).

Residues Glu-11 and Glu-14 contribute to the active site. The Schiff-base intermediate with substrate; via pyruvic acid role is filled by Ser-71. The residue at position 71 (Ser-71) is a Pyruvic acid (Ser); by autocatalysis. Catalysis depends on Cys-85, which acts as the Proton donor; for catalytic activity. Active-site proton acceptor; for processing activity residues include Ser-236 and His-249.

This sequence belongs to the eukaryotic AdoMetDC family. Requires pyruvate as cofactor. Post-translationally, is synthesized initially as an inactive proenzyme. Formation of the active enzyme involves a self-maturation process in which the active site pyruvoyl group is generated from an internal serine residue via an autocatalytic post-translational modification. Two non-identical subunits are generated from the proenzyme in this reaction, and the pyruvate is formed at the N-terminus of the alpha chain, which is derived from the carboxyl end of the proenzyme. The post-translation cleavage follows an unusual pathway, termed non-hydrolytic serinolysis, in which the side chain hydroxyl group of the serine supplies its oxygen atom to form the C-terminus of the beta chain, while the remainder of the serine residue undergoes an oxidative deamination to produce ammonia and the pyruvoyl group blocking the N-terminus of the alpha chain.

It carries out the reaction S-adenosyl-L-methionine + H(+) = S-adenosyl 3-(methylsulfanyl)propylamine + CO2. It functions in the pathway amine and polyamine biosynthesis; S-adenosylmethioninamine biosynthesis; S-adenosylmethioninamine from S-adenosyl-L-methionine: step 1/1. The chain is S-adenosylmethionine decarboxylase proenzyme (SAMDC) from Hordeum chilense (Barley).